A 234-amino-acid polypeptide reads, in one-letter code: Triosephosphate isomerase (234 aa).

8–10 (NFK) lines the substrate pocket. Histidine 90 (electrophile) is an active-site residue. The active-site Proton acceptor is glutamate 159. Substrate-binding residues include glycine 165 and serine 197.

It belongs to the triosephosphate isomerase family. Homodimer.

The protein resides in the cytoplasm. It catalyses the reaction D-glyceraldehyde 3-phosphate = dihydroxyacetone phosphate. The protein operates within carbohydrate biosynthesis; gluconeogenesis. It functions in the pathway carbohydrate degradation; glycolysis; D-glyceraldehyde 3-phosphate from glycerone phosphate: step 1/1. Functionally, involved in the gluconeogenesis. Catalyzes stereospecifically the conversion of dihydroxyacetone phosphate (DHAP) to D-glyceraldehyde-3-phosphate (G3P). This is Triosephosphate isomerase from Helicobacter acinonychis (strain Sheeba).